Here is a 127-residue protein sequence, read N- to C-terminus: Glycine cleavage system H protein (127 aa).

Residues 24-106 enclose the Lipoyl-binding domain; the sequence is TATLGISAFA…YGEGWLVKVQ (83 aa). Lys-65 is modified (N6-lipoyllysine).

Belongs to the GcvH family. The glycine cleavage system is composed of four proteins: P, T, L and H. (R)-lipoate is required as a cofactor.

The glycine cleavage system catalyzes the degradation of glycine. The H protein shuttles the methylamine group of glycine from the P protein to the T protein. In Thermosynechococcus vestitus (strain NIES-2133 / IAM M-273 / BP-1), this protein is Glycine cleavage system H protein.